The sequence spans 295 residues: Sulfotransferase 1A1 (295 aa).

Position 48-53 (48-53) interacts with 3'-phosphoadenylyl sulfate; sequence KSGTTW. 106-108 is a binding site for substrate; that stretch reads KTH. His108 (proton acceptor) is an active-site residue. 3'-phosphoadenylyl sulfate contacts are provided by residues Arg130, Ser138, Tyr193, 227-232, and 255-259; these read TSFKEM and FMRKG. Position 138 is a phosphoserine (Ser138).

This sequence belongs to the sulfotransferase 1 family. In terms of assembly, homodimer. Distal lung parenchyma.

The protein resides in the cytoplasm. The enzyme catalyses a phenol + 3'-phosphoadenylyl sulfate = an aryl sulfate + adenosine 3',5'-bisphosphate + H(+). The catalysed reaction is 17beta-estradiol + 3'-phosphoadenylyl sulfate = 17beta-estradiol 3-sulfate + adenosine 3',5'-bisphosphate + H(+). It carries out the reaction 4-ethylphenol + 3'-phosphoadenylyl sulfate = 4-ethylphenyl sulfate + adenosine 3',5'-bisphosphate + H(+). It catalyses the reaction 4-nitrophenol + 3'-phosphoadenylyl sulfate = 4-nitrophenyl sulfate + adenosine 3',5'-bisphosphate. The enzyme catalyses dopamine + 3'-phosphoadenylyl sulfate = dopamine 3-O-sulfate + adenosine 3',5'-bisphosphate + H(+). The catalysed reaction is dopamine + 3'-phosphoadenylyl sulfate = dopamine 4-O-sulfate + adenosine 3',5'-bisphosphate + H(+). It carries out the reaction 3,3',5-triiodo-L-thyronine + 3'-phosphoadenylyl sulfate = 3,3',5-triiodo-L-thyronine sulfate + adenosine 3',5'-bisphosphate + H(+). It catalyses the reaction 3,3',5'-triiodo-L-thyronine + 3'-phosphoadenylyl sulfate = 3,3',5'-triiodo-L-thyronine sulfate + adenosine 3',5'-bisphosphate + H(+). The enzyme catalyses 3,3'-diiodo-L-thyronine + 3'-phosphoadenylyl sulfate = 3,3'-diiodo-L-thyronine sulfate + adenosine 3',5'-bisphosphate + H(+). The catalysed reaction is L-thyroxine + 3'-phosphoadenylyl sulfate = L-thyroxine sulfate + adenosine 3',5'-bisphosphate + H(+). Sulfotransferase that utilizes 3'-phospho-5'-adenylyl sulfate (PAPS) as sulfonate donor to catalyze the sulfate conjugation of a wide variety of acceptor molecules bearing a hydroxyl or an amine group. Sulfonation increases the water solubility of most compounds, and therefore their renal excretion, but it can also result in bioactivation to form active metabolites. Displays broad substrate specificity for small phenolic compounds. Plays an important role in the sulfonation of endogenous molecules such as steroid hormones. Mediates also the metabolic activation of carcinogenic N-hydroxyarylamines leading to highly reactive intermediates capable of forming DNA adducts, potentially resulting in mutagenesis. May play a role in gut microbiota-host metabolic interaction. O-sulfonates 4-ethylphenol (4-EP), a dietary tyrosine-derived metabolite produced by gut bacteria. The product 4-EPS crosses the blood-brain barrier and may negatively regulate oligodendrocyte maturation and myelination, affecting the functional connectivity of different brain regions associated with the limbic system. Catalyzes the sulfate conjugation of dopamine. Catalyzes the sulfation of T4 (L-thyroxine/3,5,3',5'-tetraiodothyronine), T3 (3,5,3'-triiodothyronine), rT3 (3,3',5'-triiodothyronine) and 3,3'-T2 (3,3'-diiodothyronine), with a substrate preference of 3,3'-T2 &gt; rT3 &gt; T3 &gt; T4. The sequence is that of Sulfotransferase 1A1 (SULT1A1) from Bos taurus (Bovine).